The sequence spans 476 residues: Scopoletin glucosyltransferase (476 aa).

H16 functions as the Proton acceptor in the catalytic mechanism. H16 contributes to the an anthocyanidin binding site. D119 acts as the Charge relay in catalysis. UDP-alpha-D-glucose-binding residues include A343, Q345, H360, W363, N364, S365, and E368. A383 lines the an anthocyanidin pocket. E384 and Q385 together coordinate UDP-alpha-D-glucose.

This sequence belongs to the UDP-glycosyltransferase family.

The enzyme catalyses scopoletin + UDP-alpha-D-glucose = scopolin + UDP + H(+). Its function is as follows. Glucosyltransferase acting preferentially on aromatic substrates of the phenylpropanoid types. The best substrates are scopoletin and esculetin. Required for full resistance to virus. The chain is Scopoletin glucosyltransferase (TOGT1) from Nicotiana tabacum (Common tobacco).